A 207-amino-acid chain; its full sequence is Large ribosomal subunit protein uL4 (207 aa).

The tract at residues 48–89 (THKVKNRSEVSGGGRKPWRQKGTGRARQGSIRSPQWRGGGTV) is disordered.

The protein belongs to the universal ribosomal protein uL4 family. Part of the 50S ribosomal subunit.

Functionally, one of the primary rRNA binding proteins, this protein initially binds near the 5'-end of the 23S rRNA. It is important during the early stages of 50S assembly. It makes multiple contacts with different domains of the 23S rRNA in the assembled 50S subunit and ribosome. In terms of biological role, forms part of the polypeptide exit tunnel. In Bacillus cytotoxicus (strain DSM 22905 / CIP 110041 / 391-98 / NVH 391-98), this protein is Large ribosomal subunit protein uL4.